A 1515-amino-acid polypeptide reads, in one-letter code: MLCVAGAKLKRELDATATVLANRQDESEQSRKRLIEQSREFKKNTPEDLRKQVAPLLKSFQGEIDALSKRSKEAEAAFLTVYKRLIDVPDPVPALDVGQQLEIKVQRLHDIETENQKLRETLEEYNKEFAEVKNQEVTIKALKEKIREYEQTLKSQAETIALEKEQKLQNDFAEKERKLQETQMSTTSKLEEAEHKLQTLQTALEKTRTELFDLKTKYDEETTAKADEIEMIMTDLERANQRAEVAQREAETLREQLSSANHSLQLASQIQKAPDVAIEVLTRSSLEVELAAKEREIAQLVEDVQRLQASLTKLRENSASQISQLEQQLNAKNSTLKQLEEKLKGQADYEEVKKELNTLKSMEFAPSEGAGTQDSTKPLEVLLLEKNRSLQSENATLRISNSDLSGSARRKGRDQPESRRPGPLPASPPPQLPRNTGEQVSNTNGTHHFSPAGLSQDFFSSNLASPSLPLASTGKFALNSLLQRQLMQSFYSKAMQEAGSTSTIFSTGPYSTNSISSPSPLQQSPDVNGMAPSPSQSESAGSISEGEEIDTAEIARQVKEQLIKHNIGQRIFGHYVLGLSQGSVSEILARPKPWNKLTVRGKEPFHKMKQFLSDEQNILALRSIQGRQRENPGQSLNRLFQEVPKRRNRSEGNITTRIRASETGSDEAIKSILEQAKRELQVQKTAEPVQTSSTSSSGNSDDAIRSILQQARREMEAQQAALDPALKPAPLSQPDLTILTPKHLSASPMSTVSTYPPLAISLKKTPAAPETSTAALPSAPALKKEAQDVPTLDPPGSADAAQGVLRPMKSELVRGSTWKDPWWSPIQPERRNLTSSEETKADETTASGKERAGSSQPRAERSQLQGPSASAEYWKEWPSAESPYSQSSELSLTGASRSETPQNSPLPSSPIVPMAKPAKPSVPPLTPEQYEVYMYQEVDTIELTRQVKEKLAKNGICQRIFGEKVLGLSQGSVSDMLSRPKPWSKLTQKGREPFIRMQLWLNGELGQGVLPVQGQQQGPVLHSVASLQDPLQQGCVSSESTPKTSASCSPAPESPMSSSESVKSLTELVQQPCPAIETSKEGKPPEPSDPPASDSQPTTPLPLSGHSALSIQELVAMSPELDTYGITKRVKEVLTDNNLGQRLFGETILGLTQGSVSDLLARPKPWHKLSLKGREPFVRMQLWLNDPNNVEKLMDMKRMEKKAYMKRRHSSVSDSQPCEPPSVGIDYSQGASPQPQHQLKKPRVVLAPEEKEALKRAYQQKPYPSPKTIEELATQLNLKTSTVINWFHNYRSRIRRELFIEEIQAGSQGQAGASDSPSARSSRAAPSSEGDSCDGVEATDAEEPGGNIVATKSQGGLAEVAAAPADREEATQPAEKAKAQPLCSGTPGQDDGEDASRPRPLPEGLADAPAPVPSLAAPAAGEDAATSATAPATATEAPGAARAGPAERSSALPSTSAPANAPARRPSSLQSLFGLPEAAGARDNPVRKKKAANLNSIIHRLEKAASREEPIEWEF.

Positions leucine 56–serine 361 form a coiled coil. Residues glutamate 393–serine 405 are compositionally biased toward polar residues. 4 disordered regions span residues glutamate 393–glycine 453, proline 509–glycine 546, proline 644–aspartate 666, and leucine 680–aspartate 702. Residues glycine 422–leucine 432 are compositionally biased toward pro residues. Position 427 is a phosphoserine (serine 427). Residues threonine 436–histidine 447 are compositionally biased toward polar residues. Over residues serine 514–serine 544 the composition is skewed to low complexity. Positions alanine 540 to arginine 627 form a DNA-binding region, CUT 1. Residue serine 761 is modified to Phosphoserine. Disordered stretches follow at residues proline 769–alanine 871 and tyrosine 884–proline 923. Glycyl lysine isopeptide (Lys-Gly) (interchain with G-Cter in SUMO2) cross-links involve residues lysine 783, lysine 809, and lysine 840. Residues proline 828 to alanine 852 are compositionally biased toward basic and acidic residues. Composition is skewed to polar residues over residues glycine 853–serine 868 and tyrosine 884–leucine 906. Serine 904 bears the Phosphoserine mark. Residues glutamine 929–glutamine 1016 constitute a DNA-binding region (CUT 2). Over residues glutamine 1032 to threonine 1044 the composition is skewed to polar residues. The tract at residues glutamine 1032–glycine 1105 is disordered. The span at serine 1045–serine 1061 shows a compositional bias: low complexity. 2 positions are modified to phosphoserine: serine 1054 and serine 1064. A DNA-binding region (CUT 3) is located at residues glutamine 1112 to methionine 1199. Residues arginine 1207 to proline 1242 form a disordered region. Residues leucine 1239–leucine 1298 constitute a DNA-binding region (homeobox). A Phosphoserine modification is found at serine 1265. A Glycyl lysine isopeptide (Lys-Gly) (interchain with G-Cter in SUMO2) cross-link involves residue lysine 1279. The disordered stretch occupies residues serine 1307–lysine 1488. Residues alanine 1313 to serine 1328 show a composition bias toward low complexity. Residues aspartate 1331 to glutamate 1343 show a composition bias toward acidic residues. Serine 1332 is subject to Phosphoserine. Residues alanine 1365–lysine 1378 are compositionally biased toward basic and acidic residues. Low complexity predominate over residues alanine 1406–serine 1468. Phosphoserine occurs at positions 1468, 1496, and 1506.

This sequence belongs to the CUT homeobox family. As to quaternary structure, interacts with BANP. Interacts with SATB1 (via DNA-binding domains); the interaction inhibits the attachment of both proteins to DNA. Post-translationally, phosphorylated by PKA. In terms of processing, as cells progress into S phase, a fraction of CUX1 molecules is proteolytically processed into N-terminally truncated proteins of 110 kDa by CTSL. Cell cycle-dependent processing of CUX1 serves to generate a CDP/Cux p110 with distinct DNA binding and transcriptional properties. As to expression, testis-specific where it is expressed in germ cells.

Its subcellular location is the nucleus. Its function is as follows. Transcription factor involved in the control of neuronal differentiation in the brain. Regulates dendrite development and branching, and dendritic spine formation in cortical layers II-III. Also involved in the control of synaptogenesis. In addition, it has probably a broad role in mammalian development as a repressor of developmentally regulated gene expression. May act by preventing binding of positively-activing CCAAT factors to promoters. Component of nf-munr repressor; binds to the matrix attachment regions (MARs) (5' and 3') of the immunoglobulin heavy chain enhancer. Represses T-cell receptor (TCR) beta enhancer function by binding to MARbeta, an ATC-rich DNA sequence located upstream of the TCR beta enhancer. Binds to the TH enhancer; may require the basic helix-loop-helix protein TCF4 as a coactivator. In terms of biological role, plays a role in cell cycle progression, in particular at the G1/S transition. As cells progress into S phase, a fraction of CUX1 molecules is proteolytically processed into N-terminally truncated proteins of 110 kDa. While CUX1 only transiently binds to DNA and carries the CCAAT-displacement activity, CDP/Cux p110 makes a stable interaction with DNA and stimulates expression of genes such as POLA1. In Mus musculus (Mouse), this protein is Homeobox protein cut-like 1.